The primary structure comprises 483 residues: Septin-8 (483 aa).

Basic and acidic residues predominate over residues 1–16 (MAATDLERFSNAEPEP). Residues 1–22 (MAATDLERFSNAEPEPRSLSLG) form a disordered region. Residue Ala2 is modified to N-acetylalanine. Position 10 is a phosphoserine (Ser10). The 267-residue stretch at 41-307 (QGFSFNILCV…ELYRRCKLEE (267 aa)) folds into the Septin-type G domain. Residues 51 to 58 (GETGIGKS) are G1 motif. GTP is bound by residues 51-58 (GETGIGKS), Gly106, 187-195 (KADTISKSE), Gly241, and Arg256. The G3 motif stretch occupies residues 103–106 (DAVG). A G4 motif region spans residues 186 to 189 (AKAD). A coiled-coil region spans residues 320–413 (FSLQETYEAK…AVEALQSQAL (94 aa)). Residues 411–420 (QALHATSQQP) are compositionally biased toward polar residues. Residues 411 to 443 (QALHATSQQPLRKDKDKKNRSDIGAHQPGMSLS) form a disordered region. Over residues 421–433 (LRKDKDKKNRSDI) the composition is skewed to basic and acidic residues.

Belongs to the TRAFAC class TrmE-Era-EngA-EngB-Septin-like GTPase superfamily. Septin GTPase family. As to quaternary structure, septins polymerize into heterooligomeric protein complexes that form filaments, and can associate with cellular membranes, actin filaments and microtubules. GTPase activity is required for filament formation. Interacts with CDK14. Interacts with SEPTIN5. Interacts with SEPTIN7. Interacts with SEPTIN4. Interacts with VAMP2; the interaction inhibits interaction of VAMP2 with SYP. Interacts with STX1A. In terms of tissue distribution, widely expressed, including in brain, heart and platelets; most abundant in aorta. Isoform 2 is expressed at low levels in specific brain areas, such as occipital pole, frontal lobe, temporal lobe and putamen. Isoform 1 and 3 are highly expressed in specific brain areas, such as occipital pole, frontal lobe, temporal lobe and putamen. Isoform 2 is highly expressed in prostate, testis and ovary. Isoform 1 and isoform 3 are expressed at low levels in prostate, testis and ovary.

The protein localises to the cytoplasm. The protein resides in the cytoskeleton. It is found in the synapse. Its subcellular location is the cell projection. It localises to the axon. The protein localises to the cytoplasmic vesicle. The protein resides in the secretory vesicle. It is found in the synaptic vesicle membrane. Its subcellular location is the presynapse. Functionally, filament-forming cytoskeletal GTPase. May play a role in platelet secretion. Seems to participate in the process of SNARE complex formation in synaptic vesicles. Stabilizes BACE1 protein levels and promotes the sorting and accumulation of BACE1 to the recycling or endosomal compartments, modulating the beta-amyloidogenic processing of APP. In Homo sapiens (Human), this protein is Septin-8.